The primary structure comprises 317 residues: MTSSAKSSFVLGHRHLLGIEGLSVADITGLLDLSEEYVELNRQVDKKRTSLRGLTQVNLFFEASTRTQSSFEIAGKRLGADVMNMSVSSLSTRKGETLVDTAMTLNAMHPDILVMRHSASGAVELLARKVDGSVVNAGDGAHEHPTQALLDALTIRRNKGRLDGLLVAICGDVLHSRVARSNIILLNAMGARVRVVAPSTLLPPGIERMGVEVARDMREGLDGADIVMMLRLQRERMSGSFVPSSSEYFHYFGLDQKKLAYAKPNALVMHPGPMNRGVEIDSIVADGTQSLIREQVEMGVAVRMAVLEALARNLPNA.

The carbamoyl phosphate site is built by R66 and T67. Residue K94 coordinates L-aspartate. Carbamoyl phosphate-binding residues include R116, H144, and Q147. Residues R177 and R231 each contribute to the L-aspartate site. Positions 272 and 273 each coordinate carbamoyl phosphate.

The protein belongs to the aspartate/ornithine carbamoyltransferase superfamily. ATCase family. In terms of assembly, heterododecamer (2C3:3R2) of six catalytic PyrB chains organized as two trimers (C3), and six regulatory PyrI chains organized as three dimers (R2).

It catalyses the reaction carbamoyl phosphate + L-aspartate = N-carbamoyl-L-aspartate + phosphate + H(+). It participates in pyrimidine metabolism; UMP biosynthesis via de novo pathway; (S)-dihydroorotate from bicarbonate: step 2/3. Its function is as follows. Catalyzes the condensation of carbamoyl phosphate and aspartate to form carbamoyl aspartate and inorganic phosphate, the committed step in the de novo pyrimidine nucleotide biosynthesis pathway. In Nitrobacter winogradskyi (strain ATCC 25391 / DSM 10237 / CIP 104748 / NCIMB 11846 / Nb-255), this protein is Aspartate carbamoyltransferase catalytic subunit.